We begin with the raw amino-acid sequence, 233 residues long: UPF0280 protein AF_0649 (233 aa).

It belongs to the UPF0280 family.

In Archaeoglobus fulgidus (strain ATCC 49558 / DSM 4304 / JCM 9628 / NBRC 100126 / VC-16), this protein is UPF0280 protein AF_0649.